A 566-amino-acid polypeptide reads, in one-letter code: Cytoplasmic polyadenylation element-binding protein 2 (566 aa).

Disordered regions lie at residues 17-46 (FWGNGDQLEGKTLSSIKQQESKKMDDSVEG) and 64-98 (LERLHEKEEQECEEERLDWSEKVDSEEEEEDIQEQ). The segment covering 87-98 (DSEEEEEDIQEQ) has biased composition (acidic residues). The region spanning 430–512 (MVAFIGGVPR…KRVEIKPYFF (83 aa)) is the RRM domain.

Its function is as follows. Cytoplasmic polyadenylation element binding protein that binds to and regulates the translation of specific mRNAs. In Caenorhabditis briggsae, this protein is Cytoplasmic polyadenylation element-binding protein 2 (cpb-2).